A 422-amino-acid polypeptide reads, in one-letter code: Gamma-glutamyl phosphate reductase (422 aa).

This sequence belongs to the gamma-glutamyl phosphate reductase family.

Its subcellular location is the cytoplasm. The enzyme catalyses L-glutamate 5-semialdehyde + phosphate + NADP(+) = L-glutamyl 5-phosphate + NADPH + H(+). The protein operates within amino-acid biosynthesis; L-proline biosynthesis; L-glutamate 5-semialdehyde from L-glutamate: step 2/2. Catalyzes the NADPH-dependent reduction of L-glutamate 5-phosphate into L-glutamate 5-semialdehyde and phosphate. The product spontaneously undergoes cyclization to form 1-pyrroline-5-carboxylate. This Chloroflexus aggregans (strain MD-66 / DSM 9485) protein is Gamma-glutamyl phosphate reductase.